A 649-amino-acid chain; its full sequence is Alpha-amylase (649 aa).

Glutamate 124 (nucleophile) is an active-site residue. Aspartate 215 acts as the Proton donor in catalysis.

Belongs to the glycosyl hydrolase 57 family. As to quaternary structure, homodimer.

It catalyses the reaction Endohydrolysis of (1-&gt;4)-alpha-D-glucosidic linkages in polysaccharides containing three or more (1-&gt;4)-alpha-linked D-glucose units.. Displays a broad range of substrate specificity, with the capacity to hydrolyze carbohydrates as simple as maltotriose. The chain is Alpha-amylase (amyA) from Pyrococcus furiosus (strain ATCC 43587 / DSM 3638 / JCM 8422 / Vc1).